The sequence spans 252 residues: Triosephosphate isomerase (252 aa).

Residue 9-11 participates in substrate binding; sequence NWK. Catalysis depends on His96, which acts as the Electrophile. The Proton acceptor role is filled by Glu166. Residues Gly172, Ser212, and 233–234 contribute to the substrate site; that span reads GG.

Belongs to the triosephosphate isomerase family. As to quaternary structure, homodimer.

Its subcellular location is the cytoplasm. The catalysed reaction is D-glyceraldehyde 3-phosphate = dihydroxyacetone phosphate. It participates in carbohydrate biosynthesis; gluconeogenesis. The protein operates within carbohydrate degradation; glycolysis; D-glyceraldehyde 3-phosphate from glycerone phosphate: step 1/1. Its function is as follows. Involved in the gluconeogenesis. Catalyzes stereospecifically the conversion of dihydroxyacetone phosphate (DHAP) to D-glyceraldehyde-3-phosphate (G3P). This chain is Triosephosphate isomerase, found in Chlorobium chlorochromatii (strain CaD3).